The chain runs to 148 residues: Hemoglobin subunit beta-A (148 aa).

One can recognise a Globin domain in the interval aspartate 3–histidine 148. Heme b is bound by residues histidine 64 and histidine 93.

Belongs to the globin family. Heterotetramer of two alpha chains and two beta chains. Red blood cells.

Involved in oxygen transport from gills to the various peripheral tissues. This chain is Hemoglobin subunit beta-A (hbb1), found in Seriola quinqueradiata (Five-ray yellowtail).